Reading from the N-terminus, the 536-residue chain is Membrane protein insertase YidC (536 aa).

The next 5 membrane-spanning stretches (helical) occupy residues 3–23 (LQRN…WKTW), 346–366 (ICGN…GITF), 417–437 (GGCF…YMLI), 454–474 (LSDQ…MFFI), and 494–514 (IPIL…LYYL).

Belongs to the OXA1/ALB3/YidC family. Type 1 subfamily. In terms of assembly, interacts with the Sec translocase complex via SecD. Specifically interacts with transmembrane segments of nascent integral membrane proteins during membrane integration.

It localises to the cell membrane. Required for the insertion and/or proper folding and/or complex formation of integral membrane proteins into the membrane. Involved in integration of membrane proteins that insert both dependently and independently of the Sec translocase complex, as well as at least some lipoproteins. Aids folding of multispanning membrane proteins. The protein is Membrane protein insertase YidC of Buchnera aphidicola subsp. Baizongia pistaciae (strain Bp).